Here is a 164-residue protein sequence, read N- to C-terminus: FMN reductase (NADH) RutF (164 aa).

It belongs to the non-flavoprotein flavin reductase family. RutF subfamily.

It catalyses the reaction FMNH2 + NAD(+) = FMN + NADH + 2 H(+). Catalyzes the reduction of FMN to FMNH2 which is used to reduce pyrimidine by RutA via the Rut pathway. This Klebsiella variicola (strain At-22) protein is FMN reductase (NADH) RutF.